We begin with the raw amino-acid sequence, 405 residues long: Potassium channel subfamily K member 18 (405 aa).

The helical transmembrane segment at 43–63 (LPGLCFLCCLVTYALVGAALF) threads the bilayer. Asparagine 94 carries N-linked (GlcNAc...) asparagine glycosylation. The segment at residues 125–151 (FLSALFFCCTVFSTVGYGHMYPVTRLG) is an intramembrane region (pore-forming). K(+)-binding residues include threonine 138, valine 139, glycine 140, and tyrosine 141. Residues 138–143 (TVGYGH) form a selectivity filter 1 region. Residues 153–173 (FLCMLYALFGIPLMFLVLTDI) form a helical membrane-spanning segment. Residues 221–226 (PQIVID) are interaction with calcineurin. Residues 272 to 277 (RSNSCP) form an interaction with YWHAH region. A phosphoserine mark is found at serine 275 and serine 287. The chain crosses the membrane as a helical span at residues 304-324 (IPLPVIALVIFAYISCAAAIL). Residues 337-351 (FYFCFVTLTTIGFGD) constitute an intramembrane region (pore-forming). Residues 346 to 351 (TIGFGD) form a selectivity filter 2 region. The helical transmembrane segment at 358–378 (HFFLFFSIYIIVGMEILFIAF) threads the bilayer.

It belongs to the two pore domain potassium channel (TC 1.A.1.8) family. Homodimer. Heterodimer with KCNK2. Heterodimer with KCNK10. Interacts with calcineurin. Interacts with YWHAH, in a phosphorylation-dependent manner. Phosphorylation of Ser-275 is required for the binding of 14-3-3eta/YWHAH. Calcineurin-mediated dephosphorylation of Ser-287 enhances channel activity. Post-translationally, N-glycosylated.

The protein localises to the cell membrane. The catalysed reaction is K(+)(in) = K(+)(out). With respect to regulation, activated by volatile anesthetics, such as isoflurane and inhibited by local anesthetics such as bupivacaine and lidocaine. Inhibited by extracellular acidic pH. Inhibited by Zn(2+) ions. In terms of biological role, k(+) channel that conducts outward and inward rectifying currents at depolarized and hyperpolarized membrane potentials, respectively. The outward rectifying currents are voltage-dependent, coupled to K(+) electrochemical gradient across the membrane, whereas the inward currents can be induced in response to activation of Ca(2+)-mobilizing receptors. Homo- and heterodimerizes to form functional channels with distinct regulatory and gating properties. In trigeminal ganglia sensory neurons, the heterodimers of KCNK18/TRESK and KCNK2/TREK-1 or KCNK10/TREK-2 inhibit neuronal firing and neurogenic inflammation by stabilizing the resting membrane potential at K(+) equilibrium potential as well as by regulating the threshold of action potentials and the spike frequency. In thymocytes, conducts K(+) currents upon T cell receptor (TCR) signaling leading to sustained Ca(2+) influx and NF-kappa-B activation, FOXP3 transcription and positive selection of regulatory T cell (Treg) progenitor subsets. Appears to mediate the analgesics effects of hydroxy-alpha-sanshool, a metabolite naturally present in Schezuan pepper and other Xanthoxylum plants. The sequence is that of Potassium channel subfamily K member 18 (Kcnk18) from Rattus norvegicus (Rat).